Here is a 751-residue protein sequence, read N- to C-terminus: Photosystem I P700 chlorophyll a apoprotein A1 (751 aa).

8 consecutive transmembrane segments (helical) span residues 73–96 (VFSA…FHGA), 159–182 (LYTT…FHYH), 198–222 (LNHH…HVSL), 294–312 (TVHH…GHQY), 349–372 (WHAQ…HHMY), 388–414 (LSLF…IFMV), 436–458 (AMIS…LYIH), and 533–551 (FMVH…LILL). The [4Fe-4S] cluster site is built by Cys-575 and Cys-584. 2 helical membrane-spanning segments follow: residues 591–612 (HVFL…HFSW) and 665–687 (LSAY…MFLF). His-676 serves as a coordination point for chlorophyll a'. Met-684 and Tyr-692 together coordinate chlorophyll a. Residue Trp-693 participates in phylloquinone binding. A helical transmembrane segment spans residues 725-745 (AVGVAHYLLGGIATTWSFFLA).

Belongs to the PsaA/PsaB family. In terms of assembly, the PsaA/B heterodimer binds the P700 chlorophyll special pair and subsequent electron acceptors. PSI consists of a core antenna complex that captures photons, and an electron transfer chain that converts photonic excitation into a charge separation. The eukaryotic PSI reaction center is composed of at least 11 subunits. P700 is a chlorophyll a/chlorophyll a' dimer, A0 is one or more chlorophyll a, A1 is one or both phylloquinones and FX is a shared 4Fe-4S iron-sulfur center. is required as a cofactor.

Its subcellular location is the plastid. It localises to the chloroplast thylakoid membrane. It catalyses the reaction reduced [plastocyanin] + hnu + oxidized [2Fe-2S]-[ferredoxin] = oxidized [plastocyanin] + reduced [2Fe-2S]-[ferredoxin]. PsaA and PsaB bind P700, the primary electron donor of photosystem I (PSI), as well as the electron acceptors A0, A1 and FX. PSI is a plastocyanin/cytochrome c6-ferredoxin oxidoreductase, converting photonic excitation into a charge separation, which transfers an electron from the donor P700 chlorophyll pair to the spectroscopically characterized acceptors A0, A1, FX, FA and FB in turn. Oxidized P700 is reduced on the lumenal side of the thylakoid membrane by plastocyanin or cytochrome c6. The polypeptide is Photosystem I P700 chlorophyll a apoprotein A1 (Chlorella vulgaris (Green alga)).